The chain runs to 182 residues: Flavin prenyltransferase UbiX (182 aa).

FMN is bound by residues 9 to 11 (GAS), serine 35, 86 to 89 (SIKT), and arginine 121. 2 residues coordinate dimethylallyl phosphate: tyrosine 151 and arginine 167.

This sequence belongs to the UbiX/PAD1 family.

The enzyme catalyses dimethylallyl phosphate + FMNH2 = prenylated FMNH2 + phosphate. Its function is as follows. Flavin prenyltransferase that catalyzes the synthesis of the prenylated FMN cofactor (prenyl-FMN) for 4-hydroxy-3-polyprenylbenzoic acid decarboxylase UbiD. The prenyltransferase is metal-independent and links a dimethylallyl moiety from dimethylallyl monophosphate (DMAP) to the flavin N5 and C6 atoms of FMN. This chain is Flavin prenyltransferase UbiX, found in Archaeoglobus fulgidus (strain ATCC 49558 / DSM 4304 / JCM 9628 / NBRC 100126 / VC-16).